The chain runs to 123 residues: ATP synthase epsilon chain (123 aa).

Belongs to the ATPase epsilon chain family. F-type ATPases have 2 components, CF(1) - the catalytic core - and CF(0) - the membrane proton channel. CF(1) has five subunits: alpha(3), beta(3), gamma(1), delta(1), epsilon(1). CF(0) has three main subunits: a, b and c.

It localises to the cell inner membrane. Functionally, produces ATP from ADP in the presence of a proton gradient across the membrane. The sequence is that of ATP synthase epsilon chain from Helicobacter pylori (strain P12).